Here is a 365-residue protein sequence, read N- to C-terminus: Histidinol-phosphate aminotransferase (365 aa).

N6-(pyridoxal phosphate)lysine is present on lysine 220.

This sequence belongs to the class-II pyridoxal-phosphate-dependent aminotransferase family. Histidinol-phosphate aminotransferase subfamily. As to quaternary structure, homodimer. Pyridoxal 5'-phosphate serves as cofactor.

The enzyme catalyses L-histidinol phosphate + 2-oxoglutarate = 3-(imidazol-4-yl)-2-oxopropyl phosphate + L-glutamate. Its pathway is amino-acid biosynthesis; L-histidine biosynthesis; L-histidine from 5-phospho-alpha-D-ribose 1-diphosphate: step 7/9. In Neisseria meningitidis serogroup B (strain ATCC BAA-335 / MC58), this protein is Histidinol-phosphate aminotransferase.